We begin with the raw amino-acid sequence, 775 residues long: DNA polymerase (775 aa).

The protein belongs to the DNA polymerase type-B family. In terms of assembly, monomer.

It carries out the reaction DNA(n) + a 2'-deoxyribonucleoside 5'-triphosphate = DNA(n+1) + diphosphate. Its activity is regulated as follows. An 11-mer corresponding to the PIP-box of RfcL inhibits DNA synthesis. Its function is as follows. In addition to polymerase activity, this DNA polymerase exhibits 3' to 5' exonuclease activity. This is DNA polymerase (pol) from Pyrococcus furiosus (strain ATCC 43587 / DSM 3638 / JCM 8422 / Vc1).